The following is a 72-amino-acid chain: uncharacterized protein (72 aa).

Belongs to the ycf76 family.

It localises to the plastid. Its subcellular location is the chloroplast. This is an uncharacterized protein from Oryza nivara (Indian wild rice).